A 291-amino-acid chain; its full sequence is Protein/nucleic acid deglycase HchA (291 aa).

The segment covering 1 to 18 (MSNERDTSRTPTPDHAEH) has biased composition (basic and acidic residues). The disordered stretch occupies residues 1–24 (MSNERDTSRTPTPDHAEHNAFFPS). C188 serves as the catalytic Nucleophile.

This sequence belongs to the peptidase C56 family. HchA subfamily.

The protein resides in the cytoplasm. The enzyme catalyses N(omega)-(1-hydroxy-2-oxopropyl)-L-arginyl-[protein] + H2O = lactate + L-arginyl-[protein] + H(+). The catalysed reaction is N(6)-(1-hydroxy-2-oxopropyl)-L-lysyl-[protein] + H2O = lactate + L-lysyl-[protein] + H(+). It carries out the reaction S-(1-hydroxy-2-oxopropyl)-L-cysteinyl-[protein] + H2O = lactate + L-cysteinyl-[protein] + H(+). It catalyses the reaction N(omega)-(1-hydroxy-2-oxoethyl)-L-arginyl-[protein] + H2O = L-arginyl-[protein] + glycolate + H(+). The enzyme catalyses N(6)-(1-hydroxy-2-oxoethyl)-L-lysyl-[protein] + H2O = glycolate + L-lysyl-[protein] + H(+). The catalysed reaction is S-(1-hydroxy-2-oxoethyl)-L-cysteinyl-[protein] + H2O = glycolate + L-cysteinyl-[protein] + H(+). It carries out the reaction N(2)-(1-hydroxy-2-oxopropyl)-dGTP + H2O = lactate + dGTP + H(+). It catalyses the reaction N(2)-(1-hydroxy-2-oxopropyl)-GTP + H2O = lactate + GTP + H(+). The enzyme catalyses N(2)-(1-hydroxy-2-oxopropyl)-GDP + H2O = lactate + GDP + H(+). The catalysed reaction is N(2)-(1-hydroxy-2-oxopropyl)-GMP + H2O = lactate + GMP + H(+). It carries out the reaction N(2)-(1-hydroxy-2-oxoethyl)-dGTP + H2O = dGTP + glycolate + H(+). It catalyses the reaction N(2)-(1-hydroxy-2-oxoethyl)-GTP + H2O = glycolate + GTP + H(+). The enzyme catalyses N(2)-(1-hydroxy-2-oxoethyl)-GDP + H2O = glycolate + GDP + H(+). The catalysed reaction is N(2)-(1-hydroxy-2-oxoethyl)-GMP + H2O = glycolate + GMP + H(+). It carries out the reaction an N(2)-(1-hydroxy-2-oxopropyl)-guanosine in RNA + H2O = a guanosine in RNA + lactate + H(+). It catalyses the reaction an N(2)-(1-hydroxy-2-oxopropyl)-2'-deoxyguanosine in DNA + H2O = a 2'-deoxyguanosine in DNA + lactate + H(+). The enzyme catalyses an N(2)-(1-hydroxy-2-oxoethyl)-guanosine in RNA + H2O = a guanosine in RNA + glycolate + H(+). The catalysed reaction is an N(2)-(1-hydroxy-2-oxoethyl)-2'-deoxyguanosine in DNA + H2O = a 2'-deoxyguanosine in DNA + glycolate + H(+). Protein and nucleotide deglycase that catalyzes the deglycation of the Maillard adducts formed between amino groups of proteins or nucleotides and reactive carbonyl groups of glyoxals. Thus, functions as a protein deglycase that repairs methylglyoxal- and glyoxal-glycated proteins, and releases repaired proteins and lactate or glycolate, respectively. Deglycates cysteine, arginine and lysine residues in proteins, and thus reactivates these proteins by reversing glycation by glyoxals. Acts on early glycation intermediates (hemithioacetals and aminocarbinols), preventing the formation of Schiff bases and advanced glycation endproducts (AGE). Also functions as a nucleotide deglycase able to repair glycated guanine in the free nucleotide pool (GTP, GDP, GMP, dGTP) and in DNA and RNA. Is thus involved in a major nucleotide repair system named guanine glycation repair (GG repair), dedicated to reversing methylglyoxal and glyoxal damage via nucleotide sanitization and direct nucleic acid repair. Plays an important role in protecting cells from carbonyl stress. This is Protein/nucleic acid deglycase HchA from Pseudomonas aeruginosa (strain UCBPP-PA14).